We begin with the raw amino-acid sequence, 1553 residues long: MASSQPTSSGPILDSPPSPNPQSQLNTETSSSQHRANPSEAPAQPGPGPARPSALTKRPSHREVAAYRMSRKLQRLRADSNQPHSPTMELPDRLKDNGKEEDNEEDVLQPQGGMFMNMNQSIFGLIAAAGSTVDFHDRFEGQSSEDEDDVPNHMAMTFAGPGIKGTARNRETAGTVKSLSQTVVFNKPPASATVDAGPSNIHRRRLPGHKLLQSVPSLSRLSSSHKSKKTKQHNATAMADNKIEEEEDPDPSSPLPPLSKDETESLGLAPPIEIVRAEGNGAPLMSRMLEARAEMEARPSFDLDRLSGEHRRDDAGVTGQLAKKLKDIFEFDTAEEVIEEYPCWLLQHVLLQGYMYITANHIAFYAHLPKKAHEIAKSGYLSKSGKRNPKYNRYWFRLKGDVLSYYQDPKDHYFPAGQIDLRYGISASVNDKEKEGNYFSVSTHHRTYHFKADSARSAKEWVKSLQRVIFRSHNDGDSVKISIPIRNILDIEEAQMVEFADTCKIRVIDNDETYAIDEYFFSFFSFGKKAIQVLKVLVEDSSPEDSGANDAPKGTGGDRAIGDNLGSPRTRTFSEGVKATLSPVSPIQIASPSSRASGDYFKSSFDGTRPFSRRSFDASPGTAGYAGSPPRRLHGDGRRSFSKPRHEPHASTDSYAQSFDDPSQASLSALVASGSEDQSASQILRGSDVFHSPIFRRSASATRATTEGEGVAAPPIVRQHTAGLVRLHGPHHAATTGQIGDHMAEAEGGPSTPMLQSIAMMGNYPLQRANAFMGYLDQQSRRMSNLLATESMGYVEKVSGMWKGGKKHYDHPAGRRTEREDVEDDPEERALSEARFQAHFALPETERLQAAYFGFIVRVLPLYGKIYISNRHFCFRSLLPGTRTKLILPLKDIETVDKEKGFRFGYSGLVVVIRGHEEIFFEFAKAENRDDCAITIIQSLDAARYLAESQEVEEAQAAEAERDALNQARNEEFPDHEIELPRQASGVSDAPTILFDDPKASFLNFKPSEPMRITCLTIGSRGDVQPYIALCKRLLEEGHRPKIVTHREFKDWIESHGIEFGPVEGDPSELMRICIENGTFTYAFLREANSKFRGWLDELLTSAWEACQGSDLLIESPSAMAGIHIAEALGIPYFRAFTMPWTRTRAYPHAFIMPGQKMGGAYNYITYVMFDNVFWKATAHQVNRWRNKYLGLPNTSLEKLQPNKVPFLYNFSPSVVPPPIDYSDWIRVTGYWFLDEGGDKWQPPKELTDFIAKARADEKKLVYIGFGSIIVSDPAKMTQEIIDAVLKADVRCILSKGWSDRSATVDGVEKPKVADPSFPPEILQIQSAPHDWLFQQVDAAAHHGGSGTTGASLRAGIPTIIRPFFGDQFFFAGRVEDLGVGIYLKKWGVQSFARALWEATHSSRMQMRAEVLGGQIRAENGVDTAIQAIYRDLDYARNLITLKRQKHQSRRNSVATPTPGAKPNAPEDDQGQAAEEDDIDADDEEEESWTFVGGNEDDLTGSMSMSRSDMLSQTVADLRGVKVGKAPALGSRVLSSPPTSPGAMRGAGGVKYV.

2 stretches are compositionally biased toward polar residues: residues 1–10 (MASSQPTSSG) and 25–36 (LNTETSSSQHRA). Disordered regions lie at residues 1–106 (MASS…NEED) and 189–270 (PASA…GLAP). Residues 90–100 (LPDRLKDNGKE) are compositionally biased toward basic and acidic residues. The span at 211–222 (LLQSVPSLSRLS) shows a compositional bias: low complexity. Positions 223 to 232 (SSHKSKKTKQ) are enriched in basic residues. GRAM domains are found at residues 323-370 (KKLK…HLPK) and 464-495 (SLQR…EEAQ). Positions 374 to 470 (EIAKSGYLSK…WVKSLQRVIF (97 aa)) constitute a PH domain. Disordered regions lie at residues 542-569 (SPED…GSPR), 611-662 (FSRR…FDDP), and 805-825 (GKKH…VEDD). The span at 633–650 (LHGDGRRSFSKPRHEPHA) shows a compositional bias: basic and acidic residues. Residues 651–662 (STDSYAQSFDDP) are compositionally biased toward polar residues. Residues 810–819 (DHPAGRRTER) are compositionally biased toward basic and acidic residues. The region spanning 834-900 (ARFQAHFALP…KDIETVDKEK (67 aa)) is the GRAM 3 domain. UDP-alpha-D-glucose-binding residues include Ser1020, Arg1021, Asp1023, Ala1328, His1330, His1343, Ser1346, Gly1347, Thr1348, Asp1367, and Gln1368. 2 disordered regions span residues 1446 to 1504 (KHQS…GSMS) and 1527 to 1553 (PALG…VKYV). Residues 1466–1488 (PEDDQGQAAEEDDIDADDEEEES) are compositionally biased toward acidic residues.

The protein belongs to the glycosyltransferase 28 family.

The protein localises to the cytoplasm. It is found in the preautophagosomal structure membrane. It carries out the reaction a sterol + UDP-alpha-D-glucose = a sterol 3-beta-D-glucoside + UDP + H(+). It catalyses the reaction ergosterol + UDP-alpha-D-glucose = ergosteryl 3-beta-D-glucoside + UDP + H(+). Functionally, sterol glycosyltransferase responsible for the glycosylation of ergosterol to form ergosterol-glucoside. The chain is Sterol 3-beta-glucosyltransferase (apg-12) from Neurospora crassa (strain ATCC 24698 / 74-OR23-1A / CBS 708.71 / DSM 1257 / FGSC 987).